The sequence spans 149 residues: Large ribosomal subunit protein eL19 (149 aa).

A disordered region spans residues 45 to 94 (VADGTIDAEDTQGNSRGRARERDAKESYGHKKGAGSRKGKAGARQNEKRE). Residues 62-73 (RARERDAKESYG) show a composition bias toward basic and acidic residues. Basic residues predominate over residues 74–85 (HKKGAGSRKGKA).

This sequence belongs to the eukaryotic ribosomal protein eL19 family. Part of the 50S ribosomal subunit.

Binds to the 23S rRNA. This chain is Large ribosomal subunit protein eL19, found in Halobacterium salinarum (strain ATCC 700922 / JCM 11081 / NRC-1) (Halobacterium halobium).